The primary structure comprises 431 residues: Ammonium transporter 3 (431 aa).

Residues 1–27 are Extracellular-facing; the sequence is MEQFSTSSSESSDSSSEYSLEFYMDTS. A helical transmembrane segment spans residues 28–48; it reads WVLDAANLVFFMQAGFGMLEA. The Cytoplasmic segment spans residues 49 to 63; the sequence is GMVRAKNTKSILLKN. Residues 64–84 form a helical membrane-spanning segment; it reads LINTAICAISYYCVGHSFAYG. The Extracellular segment spans residues 85–102; sequence KVNPNSFVGFGNFFLMDY. Residues 103–125 traverse the membrane as a helical segment; the sequence is THYAYWMIQWAYAATATTIATGA. Residues 126–134 lie on the Cytoplasmic side of the membrane; sequence MAERLQLHC. Residues 135-155 traverse the membrane as a helical segment; it reads YILFTLVQTILIYPFVAHWIW. At 156–160 the chain is on the extracellular side; sequence SQNGW. Residues 161–181 traverse the membrane as a helical segment; that stretch reads LFDLGIVDFAGGAVIHIVAGI. At 182 to 211 the chain is on the cytoplasmic side; it reads TGACGSFLLGPRIGRFNQESGKPKNLPGHS. The chain crosses the membrane as a helical span at residues 212 to 232; that stretch reads VVLMSLGAMILWYSWYGYTAG. Residues 233–249 lie on the Extracellular side of the membrane; that stretch reads ASLGMTRSRVLPASRVS. Residues 250–270 form a helical membrane-spanning segment; the sequence is VVVTLSGATGLITVLGIGKIF. Over 271–300 the chain is Cytoplasmic; that stretch reads NGHYDLVKGINGLIAGLVSSTSSCAYIEPW. The helical transmembrane segment at 301 to 321 threads the bilayer; that stretch reads AAIIIGFIGGIVYWFSSWALL. Over 322–333 the chain is Extracellular; the sequence is NWLRLDDPVDST. The chain crosses the membrane as a helical span at residues 334 to 354; the sequence is AIHLFGGCWSLISVAFFATHG. At 355–357 the chain is on the cytoplasmic side; sequence RVR. A helical transmembrane segment spans residues 358 to 378; it reads NPDIILPGGIFYGGGISLLWV. A topological domain (extracellular) is located at residue Gln-379. The helical transmembrane segment at 380 to 400 threads the bilayer; it reads LVGMVLAILWAGFLSGIFFFT. Residues 401 to 431 are Cytoplasmic-facing; the sequence is MDYFGKLRVDVDTELAGLDNSNHGGSAYIFD.

The protein belongs to the ammonia transporter channel (TC 1.A.11.2) family.

The protein localises to the cell membrane. Its subcellular location is the endosome membrane. It localises to the cytoplasmic vesicle. It is found in the phagosome membrane. Ammonium transporter that mediates the import of ammonium in prespore cells. Controls ammonium homeostasis during growth and development. Ammonium has been shown to function as a morphogen at multiple steps during the development. May function as an ammonia sensor that relays information concerning ammonia concentrations to the signaling pathway involved in the slug versus culmination choice and regulates prestalk gene expression. This Dictyostelium discoideum (Social amoeba) protein is Ammonium transporter 3 (amtC).